Here is a 118-residue protein sequence, read N- to C-terminus: Non-specific lipid-transfer protein 2 (118 aa).

An N-terminal signal peptide occupies residues 1–25 (MARGMKLACVVLVICMVVIAPMAEG). 4 disulfide bridges follow: cysteine 29–cysteine 76, cysteine 39–cysteine 53, cysteine 54–cysteine 99, and cysteine 74–cysteine 113.

This sequence belongs to the plant LTP family.

In terms of biological role, plant non-specific lipid-transfer proteins transfer phospholipids as well as galactolipids across membranes. May play a role in wax or cutin deposition in the cell walls of expanding epidermal cells and certain secretory tissues. Binds saturated fatty acids, jasmonic acid and, with highest efficiency, unsaturated fatty acids and lysolipids. The polypeptide is Non-specific lipid-transfer protein 2 (Lens culinaris (Lentil)).